Here is a 176-residue protein sequence, read N- to C-terminus: Large ribosomal subunit protein uL10 (176 aa).

It belongs to the universal ribosomal protein uL10 family. As to quaternary structure, part of the ribosomal stalk of the 50S ribosomal subunit. The N-terminus interacts with L11 and the large rRNA to form the base of the stalk. The C-terminus forms an elongated spine to which L12 dimers bind in a sequential fashion forming a multimeric L10(L12)X complex.

Functionally, forms part of the ribosomal stalk, playing a central role in the interaction of the ribosome with GTP-bound translation factors. The chain is Large ribosomal subunit protein uL10 from Saccharophagus degradans (strain 2-40 / ATCC 43961 / DSM 17024).